Reading from the N-terminus, the 271-residue chain is MTQAPWSLARKTAIVTGGSRGIGRAIAIHLTCKGLSKLAITYISNLAAAESTLDECRKNGLGMGIAIKADLLDPNIGHGLVQQALAGLETPTIDILVNNAAYLDPSEAASVEELTLPVFQKVMQANAFAPISIISATMPHLPVSGGRVINISSAAAKLANPGPVMTYGASKAALDSFTRSLAAEFATDKAATFNTVCVGPTVTDGFHVVGKLYPEGFMEELAKAFTAAQRVGMPQDIAFIVGFLAGEEARWVNGACMSANGGFREVLPALS.

NADP(+) is bound by residues Ile22, Asp70, and Asn99. Active-site proton donor residues include Ser152 and Ser153. Residues Tyr167, Lys171, and Thr203 each contribute to the NADP(+) site. The active-site Proton acceptor is Tyr167. The active-site Lowers pKa of active site Tyr is the Lys171.

It belongs to the short-chain dehydrogenases/reductases (SDR) family.

It catalyses the reaction a primary alcohol + NAD(+) = an aldehyde + NADH + H(+). It carries out the reaction a secondary alcohol + NAD(+) = a ketone + NADH + H(+). The protein operates within secondary metabolite biosynthesis. It functions in the pathway alkaloid biosynthesis. Its pathway is mycotoxin biosynthesis. Its function is as follows. Short chain dehydrogenase; part of the gene cluster that mediates the biosynthesis of the aspoquinolone mycotoxins. The role of asqE within the aspoquinolone pathway has still to be determined. The first step of the pathway is catalyzed by the nonribosomal peptide synthetase asqK that condenses anthranilic acid and O-methyl-L-tyrosine to produce 4'-methoxycyclopeptin. 4'-methoxycyclopeptin is then converted to 4'-methoxydehydrocyclopeptin by the ketoglutarate-dependent dioxygenase asqJ. AsqJ also converts its first product 4'-methoxydehydrocyclopeptin to 4'-methoxycyclopenin. The following conversion of 4'-methoxycyclopenin into 4'-methoxyviridicatin is catalyzed by the cyclopenase asqI. 4'-methoxyviridicatin is the precursor of quinolone natural products, and is further converted to quinolinone B. The prenyltransferase asqH1 then catalyzes the canonical Friedel-Crafts alkylation of quinolinone B with dimethylallyl cation to yield dimethylallyl quinolone, which is subjected to FAD-dependent dehydrogenation by the FAD-linked oxidoreductase asqF to yield conjugated aryl diene. The delta(3') double bond then serves as the site of the second alkylation with DMAPP catalyzed by the prenyltransferase asqH2 to yield a carbenium ion intermediate, which can be attacked by H(2)O to yield a styrenyl quinolone containing a C3'-hydroxyprenyl chain. The FAD-dependent monooxygenase asqG performs epoxidation of the terminal C7'-C8' olefin. Finally, after dehydratation of the epoxide at C3 by asqC, the quinolone epoxide rearrangement protein asqO catalyzes an enzymatic 3-exo-tet cyclization to yield the cyclopropyl-THF ring system in aspoquinolone. The sequence is that of Short chain dehydrogenase asqE from Emericella nidulans (strain FGSC A4 / ATCC 38163 / CBS 112.46 / NRRL 194 / M139) (Aspergillus nidulans).